The primary structure comprises 574 residues: Proline--tRNA ligase (574 aa).

Belongs to the class-II aminoacyl-tRNA synthetase family. ProS type 1 subfamily. As to quaternary structure, homodimer.

It localises to the cytoplasm. The enzyme catalyses tRNA(Pro) + L-proline + ATP = L-prolyl-tRNA(Pro) + AMP + diphosphate. In terms of biological role, catalyzes the attachment of proline to tRNA(Pro) in a two-step reaction: proline is first activated by ATP to form Pro-AMP and then transferred to the acceptor end of tRNA(Pro). As ProRS can inadvertently accommodate and process non-cognate amino acids such as alanine and cysteine, to avoid such errors it has two additional distinct editing activities against alanine. One activity is designated as 'pretransfer' editing and involves the tRNA(Pro)-independent hydrolysis of activated Ala-AMP. The other activity is designated 'posttransfer' editing and involves deacylation of mischarged Ala-tRNA(Pro). The misacylated Cys-tRNA(Pro) is not edited by ProRS. In Nitratidesulfovibrio vulgaris (strain ATCC 29579 / DSM 644 / CCUG 34227 / NCIMB 8303 / VKM B-1760 / Hildenborough) (Desulfovibrio vulgaris), this protein is Proline--tRNA ligase.